The following is a 69-amino-acid chain: DNA gyrase inhibitor YacG (69 aa).

Zn(2+)-binding residues include cysteine 14, cysteine 17, cysteine 33, and cysteine 37. Positions 46–69 (ADEEKSIPGAPDMSDSDGWSEDQY) are disordered. Residues 59–69 (SDSDGWSEDQY) are compositionally biased toward acidic residues.

It belongs to the DNA gyrase inhibitor YacG family. As to quaternary structure, interacts with GyrB. Zn(2+) serves as cofactor.

Functionally, inhibits all the catalytic activities of DNA gyrase by preventing its interaction with DNA. Acts by binding directly to the C-terminal domain of GyrB, which probably disrupts DNA binding by the gyrase. The protein is DNA gyrase inhibitor YacG of Aliivibrio fischeri (strain MJ11) (Vibrio fischeri).